Consider the following 312-residue polypeptide: Ornithine carbamoyltransferase (312 aa).

Carbamoyl phosphate is bound by residues 57–60, glutamine 84, arginine 108, and 135–138; these read STRT and HPCQ. Residues asparagine 166, aspartate 226, and 230-231 contribute to the L-ornithine site; that span reads SM. Residues 265–266 and arginine 293 contribute to the carbamoyl phosphate site; that span reads CL.

Belongs to the aspartate/ornithine carbamoyltransferase superfamily. OTCase family.

It localises to the cytoplasm. The enzyme catalyses carbamoyl phosphate + L-ornithine = L-citrulline + phosphate + H(+). It functions in the pathway amino-acid biosynthesis; L-arginine biosynthesis; L-arginine from L-ornithine and carbamoyl phosphate: step 1/3. Reversibly catalyzes the transfer of the carbamoyl group from carbamoyl phosphate (CP) to the N(epsilon) atom of ornithine (ORN) to produce L-citrulline. The chain is Ornithine carbamoyltransferase from Brucella ovis (strain ATCC 25840 / 63/290 / NCTC 10512).